Consider the following 259-residue polypeptide: Triosephosphate isomerase (259 aa).

10-12 serves as a coordination point for substrate; the sequence is NWK. His-102 functions as the Electrophile in the catalytic mechanism. The active-site Proton acceptor is Glu-172. Substrate is bound by residues Gly-178, Ser-218, and 239-240; that span reads GG.

It belongs to the triosephosphate isomerase family. Homodimer.

It localises to the cytoplasm. It carries out the reaction D-glyceraldehyde 3-phosphate = dihydroxyacetone phosphate. Its pathway is carbohydrate biosynthesis; gluconeogenesis. It functions in the pathway carbohydrate degradation; glycolysis; D-glyceraldehyde 3-phosphate from glycerone phosphate: step 1/1. Its function is as follows. Involved in the gluconeogenesis. Catalyzes stereospecifically the conversion of dihydroxyacetone phosphate (DHAP) to D-glyceraldehyde-3-phosphate (G3P). In Leifsonia xyli subsp. xyli (strain CTCB07), this protein is Triosephosphate isomerase.